We begin with the raw amino-acid sequence, 229 residues long: Putative N-acetylmannosamine-6-phosphate 2-epimerase (229 aa).

It belongs to the NanE family.

It carries out the reaction an N-acyl-D-glucosamine 6-phosphate = an N-acyl-D-mannosamine 6-phosphate. It participates in amino-sugar metabolism; N-acetylneuraminate degradation; D-fructose 6-phosphate from N-acetylneuraminate: step 3/5. Its function is as follows. Converts N-acetylmannosamine-6-phosphate (ManNAc-6-P) to N-acetylglucosamine-6-phosphate (GlcNAc-6-P). This chain is Putative N-acetylmannosamine-6-phosphate 2-epimerase, found in Cutibacterium acnes (strain DSM 16379 / KPA171202) (Propionibacterium acnes).